A 321-amino-acid chain; its full sequence is Iron(3+)-hydroxamate-binding protein YxeB (321 aa).

Residues 1 to 20 form the signal peptide; sequence MKKNILLVGMLVLLLMFVSA. The N-palmitoyl cysteine moiety is linked to residue C21. A lipid anchor (S-diacylglycerol cysteine) is attached at C21. Residues 24-33 are compositionally biased toward low complexity; that stretch reads TASKGSSSDS. Residues 24 to 48 are disordered; sequence TASKGSSSDSASEKTEMRTYKSPKG. Residues 58–316 enclose the Fe/B12 periplasmic-binding domain; the sequence is RIVTDFYAGE…IITDMLIKRA (259 aa).

Belongs to the bacterial solute-binding protein 8 family. In terms of assembly, the complex is composed of an ATP-binding protein (FhuC), two transmembrane proteins (FhuB and FhuG) and a solute-binding protein (FhuD or YxeB).

The protein resides in the cell membrane. The protein localises to the membrane raft. Its function is as follows. Part of the ABC transporter complex FhuCBGD involved in iron(3+)-hydroxamate import. Binds the iron(3+)-hydroxamate complex and transfers it to the membrane-bound permease. Partially required for the transport of desferrioxamine. The sequence is that of Iron(3+)-hydroxamate-binding protein YxeB (yxeB) from Bacillus subtilis (strain 168).